The sequence spans 200 residues: MRPLSVQGAWLSETRAFADDRGEFQELYSARSLRGALGYDPGVAQVNRSVSRRGVLRGVHFAQLPPSQAKYVTCLSGAVLDVVVDIRTGSPTYRAWEAVRLDDPHRSLYVEAGLGHSFMALTDDAVVVYLTSQGYAAGREHGVHPLDPDLGIAWPDGIEPVLSEKDRQAPGIAEMERRGLLPDYEECLAFRRSLCERGTG.

Substrate contacts are provided by residues Arg-21, Glu-26, 45-47 (QVN), and Arg-57. The active-site Proton acceptor is the His-60. Positions 70 and 116 each coordinate substrate. Tyr-129 (proton donor) is an active-site residue. Residues Glu-140 and Lys-165 each coordinate substrate.

Belongs to the dTDP-4-dehydrorhamnose 3,5-epimerase family.

It catalyses the reaction dTDP-4-dehydro-6-deoxy-alpha-D-glucose = dTDP-4-dehydro-beta-L-rhamnose. Its pathway is carbohydrate biosynthesis; dTDP-L-rhamnose biosynthesis. It functions in the pathway antibiotic biosynthesis; streptomycin biosynthesis. In terms of biological role, involved in the biosynthesis of the dihydrostreptose moiety of streptomycin. Catalyzes the epimerization of the C3' and C5'positions of dTDP-6-deoxy-D-xylo-4-hexulose, forming dTDP-6-deoxy-L-lyxo-4-hexulose. The chain is dTDP-4-dehydrorhamnose 3,5-epimerase from Streptomyces griseus.